A 766-amino-acid chain; its full sequence is FYVE, RhoGEF and PH domain-containing protein 4 (766 aa).

An actin filament-binding region spans residues 1–150 (MEESNPAPTS…SSVTNSHDEN (150 aa)). Composition is skewed to polar residues over residues 43 to 65 (STMN…TPQK), 132 to 145 (RNET…SVTN), and 152 to 161 (CDSSCRTQGT). The segment at 43-167 (STMNLNIPQT…TQGTDLGLPS (125 aa)) is disordered. Residues 206–393 (KLHKIATELL…STAASHSNSA (188 aa)) enclose the DH domain. One can recognise a PH 1 domain in the interval 422–521 (ELIKEGQILK…WIKALQESID (100 aa)). The segment at 559-619 (DNEVTMCMKC…VCKDCYQIMS (61 aa)) adopts an FYVE-type zinc-finger fold. Zn(2+) contacts are provided by Cys-565, Cys-568, Cys-582, Cys-585, Cys-590, Cys-593, Cys-611, and Cys-614. The region spanning 643–740 (NSEVCSFLQY…WLKIILLAVT (98 aa)) is the PH 2 domain. A phosphoserine mark is found at Ser-702 and Ser-716. Residues 745 to 766 (DGPSEHLDTLDNLPGPKEKSEC) are disordered.

Homooligomer. Detected in brain, lung, liver, skeletal muscle, kidney, testis and cultured hippocampal neurons.

It is found in the cytoplasm. The protein localises to the cytoskeleton. Its subcellular location is the cell projection. The protein resides in the filopodium. Activates CDC42, a member of the Ras-like family of Rho- and Rac proteins, by exchanging bound GDP for free GTP. Plays a role in regulating the actin cytoskeleton and cell shape. Activates MAPK8. The protein is FYVE, RhoGEF and PH domain-containing protein 4 (Fgd4) of Rattus norvegicus (Rat).